The sequence spans 101 residues: Large ribosomal subunit protein uL23 (101 aa).

The protein belongs to the universal ribosomal protein uL23 family. In terms of assembly, part of the 50S ribosomal subunit. Contacts protein L29, and trigger factor when it is bound to the ribosome.

One of the early assembly proteins it binds 23S rRNA. One of the proteins that surrounds the polypeptide exit tunnel on the outside of the ribosome. Forms the main docking site for trigger factor binding to the ribosome. This Paenarthrobacter aurescens (strain TC1) protein is Large ribosomal subunit protein uL23.